Consider the following 656-residue polypeptide: Very long-chain specific acyl-CoA dehydrogenase, mitochondrial (656 aa).

The tract at residues 1–33 is disordered; it reads MQSARMTPSVGRQLLRLGARSSRSTTVLQGQPR. Residues 1–41 constitute a mitochondrion transit peptide; the sequence is MQSARMTPSVGRQLLRLGARSSRSTTVLQGQPRPISAQRLY. Positions 42–483 are catalytic; the sequence is AREATQAVLD…ALQGCMDKGK (442 aa). N6-acetyllysine is present on K52. N6-acetyllysine; alternate occurs at positions 72 and 128. Residues K72 and K128 each carry the N6-succinyllysine; alternate modification. The residue at position 196 (K196) is an N6-succinyllysine. Residue 215–224 coordinates FAD; it reads FCLTEPSSGS. S-nitrosocysteine is present on C238. At K240 the chain carries N6-acetyllysine; alternate. K240 is modified (N6-succinyllysine; alternate). Residue 250 to 252 coordinates FAD; that stretch reads WIS. Position 269 is an N6-succinyllysine (K269). K277 and K279 each carry N6-acetyllysine; alternate. Residues K277 and K279 each carry the N6-succinyllysine; alternate modification. N6-acetyllysine is present on residues K299 and K317. K332 is subject to N6-acetyllysine; alternate. An N6-succinyllysine; alternate modification is found at K332. K373 carries the post-translational modification N6-succinyllysine. 462–464 is a binding site for substrate; it reads FEG. E463 acts as the Proton acceptor in catalysis. 465 to 467 provides a ligand contact to FAD; sequence AND. K483 carries the N6-acetyllysine; alternate modification. K483 carries the N6-succinyllysine; alternate modification. The membrane-anchoring stretch occupies residues 484 to 517; it reads ELTGLGNALKNPFGNVGLLMGEAGKQLRRRTGIG. S518 and S523 each carry phosphoserine. At K551 the chain carries N6-acetyllysine. K557 is modified (N6-acetyllysine; alternate). An N6-succinyllysine; alternate modification is found at K557. Q563 lines the FAD pocket. The residue at position 640 (K640) is an N6-succinyllysine.

This sequence belongs to the acyl-CoA dehydrogenase family. In terms of assembly, homodimer. Homodimerizes after import into the mitochondrion. FAD is required as a cofactor. S-nitrosylation at Cys-238 in liver improves catalytic efficiency.

The protein resides in the mitochondrion inner membrane. It catalyses the reaction a very-long-chain 2,3-saturated fatty acyl-CoA + oxidized [electron-transfer flavoprotein] + H(+) = a very-long-chain (2E)-enoyl-CoA + reduced [electron-transfer flavoprotein]. It carries out the reaction dodecanoyl-CoA + oxidized [electron-transfer flavoprotein] + H(+) = (2E)-dodecenoyl-CoA + reduced [electron-transfer flavoprotein]. The enzyme catalyses tetradecanoyl-CoA + oxidized [electron-transfer flavoprotein] + H(+) = (2E)-tetradecenoyl-CoA + reduced [electron-transfer flavoprotein]. The catalysed reaction is oxidized [electron-transfer flavoprotein] + hexadecanoyl-CoA + H(+) = (2E)-hexadecenoyl-CoA + reduced [electron-transfer flavoprotein]. It catalyses the reaction octadecanoyl-CoA + oxidized [electron-transfer flavoprotein] + H(+) = (2E)-octadecenoyl-CoA + reduced [electron-transfer flavoprotein]. It carries out the reaction eicosanoyl-CoA + oxidized [electron-transfer flavoprotein] + H(+) = (2E)-eicosenoyl-CoA + reduced [electron-transfer flavoprotein]. The enzyme catalyses docosanoyl-CoA + oxidized [electron-transfer flavoprotein] + H(+) = (2E)-docosenoyl-CoA + reduced [electron-transfer flavoprotein]. The catalysed reaction is tetracosanoyl-CoA + oxidized [electron-transfer flavoprotein] + H(+) = (2E)-tetracosenoyl-CoA + reduced [electron-transfer flavoprotein]. The protein operates within lipid metabolism; mitochondrial fatty acid beta-oxidation. In terms of biological role, very long-chain specific acyl-CoA dehydrogenase is one of the acyl-CoA dehydrogenases that catalyze the first step of mitochondrial fatty acid beta-oxidation, an aerobic process breaking down fatty acids into acetyl-CoA and allowing the production of energy from fats. The first step of fatty acid beta-oxidation consists in the removal of one hydrogen from C-2 and C-3 of the straight-chain fatty acyl-CoA thioester, resulting in the formation of trans-2-enoyl-CoA. Among the different mitochondrial acyl-CoA dehydrogenases, very long-chain specific acyl-CoA dehydrogenase acts specifically on acyl-CoAs with saturated 12 to 24 carbons long primary chains. The protein is Very long-chain specific acyl-CoA dehydrogenase, mitochondrial of Mus musculus (Mouse).